Here is a 200-residue protein sequence, read N- to C-terminus: MPEKLNTSARRATVTRTTKETDITATIDLDGSGTGNISSGVLFLDHMLTNFSRHSGIDITLDCKGDTEVDDHHSVEDIALVLGSAFLQSLGSKTGIQRYGWAMIPMDETLARCAVDLGGRSYCVFSAEFKRPAILGFSTEMVEHFFVSLSRTMQANIHLAIMEGKNTHHMIEAMFKAFAYAMKMAVAVTGKELPSTKGTL.

It belongs to the imidazoleglycerol-phosphate dehydratase family.

It localises to the cytoplasm. It catalyses the reaction D-erythro-1-(imidazol-4-yl)glycerol 3-phosphate = 3-(imidazol-4-yl)-2-oxopropyl phosphate + H2O. It functions in the pathway amino-acid biosynthesis; L-histidine biosynthesis; L-histidine from 5-phospho-alpha-D-ribose 1-diphosphate: step 6/9. This Chlorobium limicola (strain DSM 245 / NBRC 103803 / 6330) protein is Imidazoleglycerol-phosphate dehydratase.